We begin with the raw amino-acid sequence, 1382 residues long: Suppressor of organelle fusion 2 (1382 aa).

The BEACH domain occupies 229 to 463 (RIPLDEATSN…QLFNRPHPIR (235 aa)). 2 WD repeats span residues 1094-1133 (GHQE…DEIG) and 1140-1176 (KHTR…LLAQ).

The protein belongs to the WD repeat WDR81 family. In terms of assembly, interacts with sorf-1; the interaction is direct. Interacts with bec-1.

The protein resides in the early endosome. It localises to the late endosome. The protein localises to the cytoplasm. Together with sorf-1 negatively regulates the levels of phosphatidylinositol 3-phosphate (PtdIns3P) to enable the conversion of early endosomes to late endosomes. Binds to sorf-1 and the sorf-1-sorf-2 complex likely acts through bec-1, a non-catalytic subunit of phosphatidylinositol 3-kinase (PI3K), to suppress PI3K activity, thereby negatively regulating endosomal PtdIns3P levels. The protein is Suppressor of organelle fusion 2 of Caenorhabditis elegans.